Consider the following 227-residue polypeptide: DnaJ homolog subfamily B member 8 (227 aa).

The J domain occupies 3 to 69 (NYYEVLGVQS…KKRSVYDRAG (67 aa)).

As to quaternary structure, interacts with histone deacetylases HDAC4, HDAC6, and SIRT2, HDAC activity is required for antiaggregation.

In terms of biological role, efficient suppressor of aggregation and toxicity of disease-associated polyglutamine proteins. The protein is DnaJ homolog subfamily B member 8 (Dnajb8) of Mus musculus (Mouse).